We begin with the raw amino-acid sequence, 382 residues long: GDP-mannose transporter 1 (382 aa).

At 1 to 40 (MADDKKTNEYTVEMDKLDHGNKNFEAPAPAVRPRGPPAAQ) the chain is on the cytoplasmic side. Residues 41 to 61 (LANNPILPVLAYCGSSILMTV) form a helical membrane-spanning segment. At 62–71 (MNKYVLSGTD) the chain is on the lumenal side. A helical transmembrane segment spans residues 72 to 92 (FNLNFFLLCVQSIVCIVAIQT). The Cytoplasmic portion of the chain corresponds to 93–110 (CKSSKLITYRDFNSDEAK). A helical transmembrane segment spans residues 111-127 (KWFPITLLLIGMIYTGS). The Lumenal portion of the chain corresponds to 128 to 134 (KALQYLS). The helical transmembrane segment at 135-151 (IPVYTIFKNLTIILIAY) threads the bilayer. Residues 152-160 (GEVLWFGGS) lie on the Cytoplasmic side of the membrane. A helical membrane pass occupies residues 161–182 (VTGMTLFSFGLMVLSSIIAAWA). The Lumenal segment spans residues 183-200 (DIKHAVESSGDATAKVST). A helical transmembrane segment spans residues 201-221 (LNAGYIWMLINCLCTSSYVLG). The Cytoplasmic segment spans residues 222–233 (MRKRIKLTNFKD). The chain crosses the membrane as a helical span at residues 234–254 (FDTMFYNNLLSIPVLLVLTFL). Residues 255–274 (MEDWSSANIARNFPPADRNG) are Lumenal-facing. The helical transmembrane segment at 275 to 295 (ILFAMILSGLSSVFISYTSAW) threads the bilayer. Topologically, residues 296-303 (CVRVTSST) are cytoplasmic. The chain crosses the membrane as a helical span at residues 304–324 (TYSMVGALNKLPIALSGLIFF). Residues 325–327 (DAP) lie on the Lumenal side of the membrane. A helical transmembrane segment spans residues 328–348 (VTFPSVSAIVVGFISGIVYAV). The Cytoplasmic segment spans residues 349–382 (AKIKQSAKPKTGVLPMSNPPVSASSQSMRDSLRS). Positions 358–382 (KTGVLPMSNPPVSASSQSMRDSLRS) are disordered. Over residues 367–382 (PPVSASSQSMRDSLRS) the composition is skewed to polar residues.

This sequence belongs to the TPT transporter family. SLC35D subfamily. As to quaternary structure, homooligomer.

It localises to the golgi apparatus membrane. Its subcellular location is the cytoplasmic vesicle membrane. It is found in the endoplasmic reticulum membrane. In terms of biological role, involved in the import of GDP-mannose from the cytoplasm into the Golgi lumen. The chain is GDP-mannose transporter 1 (gmt1) from Neosartorya fischeri (strain ATCC 1020 / DSM 3700 / CBS 544.65 / FGSC A1164 / JCM 1740 / NRRL 181 / WB 181) (Aspergillus fischerianus).